The chain runs to 145 residues: ATP synthase epsilon chain (145 aa).

The interval 100–123 (RAQRAKQRAEDAIKTASEKHDSDE) is disordered. Basic and acidic residues predominate over residues 106–123 (QRAEDAIKTASEKHDSDE).

The protein belongs to the ATPase epsilon chain family. As to quaternary structure, F-type ATPases have 2 components, CF(1) - the catalytic core - and CF(0) - the membrane proton channel. CF(1) has five subunits: alpha(3), beta(3), gamma(1), delta(1), epsilon(1). CF(0) has three main subunits: a, b and c.

Its subcellular location is the cell membrane. In terms of biological role, produces ATP from ADP in the presence of a proton gradient across the membrane. The sequence is that of ATP synthase epsilon chain from Latilactobacillus sakei subsp. sakei (strain 23K) (Lactobacillus sakei subsp. sakei).